The sequence spans 181 residues: MGQIHATTIFAVHHNGGCAMAGDGQVTLGNAVVMKGTAKKVRRLFNGQVLAGFAGSVADAFTLFEMFEGKLNEYNGNLQRAAVEVAKQWRGDKMLRQLEAMLLVMDKTTLLLVSGTGEVIEPDDGILAIGSGGNYALSAGRALKKYAGETMTAREIAEAALETAAEICVFTNHNIIVEALS.

The active site involves T7. A165, C168, and T171 together coordinate Na(+).

It belongs to the peptidase T1B family. HslV subfamily. A double ring-shaped homohexamer of HslV is capped on each side by a ring-shaped HslU homohexamer. The assembly of the HslU/HslV complex is dependent on binding of ATP.

It is found in the cytoplasm. It catalyses the reaction ATP-dependent cleavage of peptide bonds with broad specificity.. With respect to regulation, allosterically activated by HslU binding. Its function is as follows. Protease subunit of a proteasome-like degradation complex believed to be a general protein degrading machinery. This Lysinibacillus sphaericus (strain C3-41) protein is ATP-dependent protease subunit HslV.